A 274-amino-acid chain; its full sequence is Ribosomal RNA small subunit methyltransferase A (274 aa).

The S-adenosyl-L-methionine site is built by N20, L22, G47, E68, D90, and N110.

This sequence belongs to the class I-like SAM-binding methyltransferase superfamily. rRNA adenine N(6)-methyltransferase family. RsmA subfamily.

Its subcellular location is the cytoplasm. The enzyme catalyses adenosine(1518)/adenosine(1519) in 16S rRNA + 4 S-adenosyl-L-methionine = N(6)-dimethyladenosine(1518)/N(6)-dimethyladenosine(1519) in 16S rRNA + 4 S-adenosyl-L-homocysteine + 4 H(+). Specifically dimethylates two adjacent adenosines (A1518 and A1519) in the loop of a conserved hairpin near the 3'-end of 16S rRNA in the 30S particle. May play a critical role in biogenesis of 30S subunits. This is Ribosomal RNA small subunit methyltransferase A from Chlorobaculum parvum (strain DSM 263 / NCIMB 8327) (Chlorobium vibrioforme subsp. thiosulfatophilum).